Consider the following 228-residue polypeptide: Non-fluorescent flavoprotein (228 aa).

Belongs to the bacterial luciferase oxidoreductase family. As to quaternary structure, homodimer. FMN serves as cofactor.

This Photobacterium leiognathi protein is Non-fluorescent flavoprotein (luxF).